A 97-amino-acid chain; its full sequence is Protein RESPONSE TO LOW SULFUR 3 (97 aa).

Residues 8–42 adopt a coiled-coil conformation; that stretch reads VTVAAEEVEELRRRNGELEREMEEMKKEMVQLWRR.

The protein is Protein RESPONSE TO LOW SULFUR 3 of Arabidopsis thaliana (Mouse-ear cress).